The following is a 127-amino-acid chain: uncharacterized protein (127 aa).

The signal sequence occupies residues Met1–Gly23.

This is an uncharacterized protein from Arabidopsis thaliana (Mouse-ear cress).